Here is an 81-residue protein sequence, read N- to C-terminus: Protein Vpu (81 aa).

Topologically, residues 1–7 are extracellular; the sequence is MQPLGII. The helical transmembrane segment at 8 to 28 threads the bilayer; that stretch reads AIAALVVAIILAIVVWTIVFI. At 29–81 the chain is on the cytoplasmic side; the sequence is EYRRIKKQRRIDCLLDRITERAEDSGNESEGDREKLSKLVEMGHHAPWDIDDL. A phosphoserine; by host CK2 mark is found at Ser-53 and Ser-57.

It belongs to the HIV-1 VPU protein family. As to quaternary structure, homopentamer. Interacts with host CD4 and BRTC; these interactions induce proteasomal degradation of CD4. Interacts with host BST2; this interaction leads to the degradation of host BST2. Interacts with host FBXW11. Interacts with host AP1M1; this interaction plays a role in the mistrafficking and subsequent degradation of host BST2. Interacts with host RANBP2; this interaction allows Vpu to down-regulate host BLM sumoylation. In terms of processing, phosphorylated by host CK2. This phosphorylation is necessary for interaction with human BTRC and degradation of CD4.

The protein resides in the host membrane. Ion channel activity is inhibited by hexamethylene amiloride in vitro. Its function is as follows. Enhances virion budding by targeting host CD4 and Tetherin/BST2 to proteasome degradation. Degradation of CD4 prevents any unwanted premature interactions between viral Env and its host receptor CD4 in the endoplasmic reticulum. Degradation of antiretroviral protein Tetherin/BST2 is important for virion budding, as BST2 tethers new viral particles to the host cell membrane. Mechanistically, Vpu bridges either CD4 or BST2 to BTRC, a substrate recognition subunit of the Skp1/Cullin/F-box protein E3 ubiquitin ligase, induces their ubiquitination and subsequent proteasomal degradation. The alteration of the E3 ligase specificity by Vpu seems to promote the degradation of host IKBKB, leading to NF-kappa-B down-regulation and subsequent apoptosis. Acts as a viroporin that forms an oligomeric ion channel in membranes. Modulates the host DNA repair mechanisms to promote degradation of nuclear viral cDNA in cells that are already productively infected in order to suppress immune sensing and proviral hyper-integration (superinfection). Manipulates PML-NBs and modulates SUMOylation of host BLM protein thereby enhancing its DNA-end processing activity toward viral unintegrated linear DNA. Also inhibits RAD52-mediated homologous repair of viral cDNA, preventing the generation of dead-end circular forms of single copies of the long terminal repeat and permitting sustained nucleolytic attack. This is Protein Vpu from Human immunodeficiency virus type 1 group M subtype D (isolate ELI) (HIV-1).